Consider the following 98-residue polypeptide: Small ribosomal subunit protein bS20 (98 aa).

The span at 1 to 15 (MAPKKTTKKGGPKKR) shows a compositional bias: basic residues. A disordered region spans residues 1–21 (MAPKKTTKKGGPKKRPSAEKR).

This sequence belongs to the bacterial ribosomal protein bS20 family.

Functionally, binds directly to 16S ribosomal RNA. The protein is Small ribosomal subunit protein bS20 of Chlamydia abortus (strain DSM 27085 / S26/3) (Chlamydophila abortus).